The primary structure comprises 373 residues: Methionine import ATP-binding protein MetN 1 (373 aa).

The region spanning 29–270 (ILIDRVRKVY…PRHEVTRRFV (242 aa)) is the ABC transporter domain. 67–74 (GRSGAGKS) provides a ligand contact to ATP.

Belongs to the ABC transporter superfamily. Methionine importer (TC 3.A.1.24) family. In terms of assembly, the complex is composed of two ATP-binding proteins (MetN), two transmembrane proteins (MetI) and a solute-binding protein (MetQ).

The protein resides in the cell inner membrane. The catalysed reaction is L-methionine(out) + ATP + H2O = L-methionine(in) + ADP + phosphate + H(+). It catalyses the reaction D-methionine(out) + ATP + H2O = D-methionine(in) + ADP + phosphate + H(+). In terms of biological role, part of the ABC transporter complex MetNIQ involved in methionine import. Responsible for energy coupling to the transport system. This chain is Methionine import ATP-binding protein MetN 1, found in Rhodopseudomonas palustris (strain ATCC BAA-98 / CGA009).